A 462-amino-acid polypeptide reads, in one-letter code: uncharacterized protein (462 aa).

A divalent metal cation contacts are provided by aspartate 12, histidine 14, aspartate 48, asparagine 81, histidine 179, and histidine 202. Positions 258–291 (ESAETKAFLNEKEREAEEKLSDAVAELAQDAEVK) form a coiled coil.

Belongs to the metallophosphoesterase superfamily. The cofactor is a divalent metal cation.

This is an uncharacterized protein from Bacillus subtilis (strain 168).